The sequence spans 115 residues: Small ribosomal subunit protein uS17 (115 aa).

Belongs to the universal ribosomal protein uS17 family. Part of the 30S ribosomal subunit.

In terms of biological role, one of the primary rRNA binding proteins, it binds specifically to the 5'-end of 16S ribosomal RNA. In Granulibacter bethesdensis (strain ATCC BAA-1260 / CGDNIH1), this protein is Small ribosomal subunit protein uS17.